The following is a 904-amino-acid chain: Trichohyalin-like protein 1 (904 aa).

In terms of domain architecture, EF-hand spans 48–83 (CVLHAVEKNSNLLNIDSNGIISFDEFVLAIFNLLNL). Disordered stretches follow at residues 102 to 792 (PEKE…CSVE) and 858 to 890 (PYTR…HPQR). Positions 113–128 (QATTGDGQWTVGTSPT) are enriched in polar residues. Composition is skewed to basic and acidic residues over residues 172–185 (ASEH…HLEG), 222–240 (TERK…EPAR), 268–300 (ATQR…DEPS), 349–371 (NLGE…ETKD), and 385–398 (SDMR…RGPE). The span at 443-452 (ETQYLSSEGG) shows a compositional bias: polar residues. Over residues 524-536 (VEEEDGYQGEDPE) the composition is skewed to acidic residues. Over residues 538–554 (PFTQSDEGSSETPNSLA) the composition is skewed to polar residues. Residues 555–578 (SEEGNSSSETGELPVQGDSQSQGD) are compositionally biased toward low complexity. Polar residues predominate over residues 586–598 (GGHNNNPDTQRQG). The segment covering 759–770 (GDQKSPAKKEHN) has biased composition (basic and acidic residues). Positions 771 to 780 (SSVPWSSLEK) are enriched in polar residues. Positions 881 to 890 (LEDKQGHPQR) are enriched in basic and acidic residues.

Belongs to the S-100 family.

The sequence is that of Trichohyalin-like protein 1 (TCHHL1) from Homo sapiens (Human).